We begin with the raw amino-acid sequence, 298 residues long: Plasmodesmata-located protein 7 (298 aa).

A signal peptide spans 1–30 (MPMAKLRNIIKTLSIFFFLIAATAPSLSSA). Residues 31–258 (TSATDTFVFG…YKTNYGGEKT (228 aa)) are Extracellular-facing. Gnk2-homologous domains are found at residues 35–139 (DTFV…NISF) and 140–240 (LGQE…TDGA). 6 disulfides stabilise this stretch: C42–C117, C93–C102, C105–C130, C152–C218, C194–C203, and C206–C231. Residues 259 to 279 (FAIIIGLLAAVVLLIIFLLFL) traverse the membrane as a helical segment. Positions 259–279 (FAIIIGLLAAVVLLIIFLLFL) are necessary and sufficient for plasmodesmal targeting. At 280-298 (RGVCSRGGDFSILHSFTLI) the chain is on the cytoplasmic side.

It belongs to the cysteine-rich repeat secretory protein family. Plasmodesmata-located proteins (PDLD) subfamily. As to quaternary structure, (Microbial infection) Interacts with Grapevine fanleaf virus (GFLV) 2B-MP. Highly expressed in lateral root and elongation zone.

Its subcellular location is the cell membrane. The protein localises to the cell junction. It localises to the plasmodesma. Modulates cell-to-cell trafficking. The polypeptide is Plasmodesmata-located protein 7 (Arabidopsis thaliana (Mouse-ear cress)).